Here is a 197-residue protein sequence, read N- to C-terminus: Ribosome maturation factor RimP (197 aa).

This sequence belongs to the RimP family.

The protein resides in the cytoplasm. Functionally, required for maturation of 30S ribosomal subunits. In Acidovorax sp. (strain JS42), this protein is Ribosome maturation factor RimP.